A 233-amino-acid polypeptide reads, in one-letter code: 2-C-methyl-D-erythritol 4-phosphate cytidylyltransferase (233 aa).

This sequence belongs to the IspD/TarI cytidylyltransferase family. IspD subfamily.

It carries out the reaction 2-C-methyl-D-erythritol 4-phosphate + CTP + H(+) = 4-CDP-2-C-methyl-D-erythritol + diphosphate. It functions in the pathway isoprenoid biosynthesis; isopentenyl diphosphate biosynthesis via DXP pathway; isopentenyl diphosphate from 1-deoxy-D-xylulose 5-phosphate: step 2/6. In terms of biological role, catalyzes the formation of 4-diphosphocytidyl-2-C-methyl-D-erythritol from CTP and 2-C-methyl-D-erythritol 4-phosphate (MEP). The protein is 2-C-methyl-D-erythritol 4-phosphate cytidylyltransferase of Lachnoclostridium phytofermentans (strain ATCC 700394 / DSM 18823 / ISDg) (Clostridium phytofermentans).